A 737-amino-acid polypeptide reads, in one-letter code: Genome polyprotein (737 aa).

N-acetylserine; by host is present on serine 2. The interaction with STAT1 stretch occupies residues 2-23 (STNPKPQRKTKRNTNRRPQDVK). The interval 2–58 (STNPKPQRKTKRNTNRRPQDVKFPGGGQIVGGVYLLPRRGPRLGVRATRKTSERSQP) is interaction with EIF2AK2/PKR. Residues 2–59 (STNPKPQRKTKRNTNRRPQDVKFPGGGQIVGGVYLLPRRGPRLGVRATRKTSERSQPR) are interaction with DDX3X. The disordered stretch occupies residues 2 to 75 (STNPKPQRKT…PKDRRSTGKS (74 aa)). Residues 2-168 (STNPKPQRKT…EDGINYATGN (167 aa)) are Cytoplasmic-facing. 2 short sequence motifs (nuclear localization signal) span residues 5 to 13 (PKPQRKTKR) and 38 to 43 (PRRGPR). Residues 7 to 16 (PQRKTKRNTN) show a composition bias toward basic residues. The segment covering 32–47 (GGVYLLPRRGPRLGVR) has biased composition (low complexity). Serine 53 carries the phosphoserine; by host modification. 2 consecutive short sequence motifs (nuclear localization signal) follow at residues 58–64 (PRGRRQP) and 66–71 (PKDRRS). Residues serine 99 and serine 116 each carry the phosphoserine; by host modification. Positions 112-152 (PRHRSRNLGKVIDTLTCGFADLMGYIPVVGAPVGGVARALA) are important for endoplasmic reticulum and mitochondrial localization. The segment at 122 to 173 (VIDTLTCGFADLMGYIPVVGAPVGGVARALAHGVRVLEDGINYATGNLPGCS) is interaction with APOA2. An important for lipid droplets localization region spans residues 164 to 167 (YATG). The helical transmembrane segment at 169–189 (LPGCSFSIFLLALLSCVTVPV) threads the bilayer. A propeptide spans 178 to 191 (LLALLSCVTVPVSA) (ER anchor for the core protein, removed in mature form by host signal peptidase). At 190 to 358 (SAVEVRNISS…FGGHWGVVFG (169 aa)) the chain is on the lumenal side. 3 N-linked (GlcNAc...) asparagine; by host glycosylation sites follow: asparagine 196, asparagine 209, and asparagine 233. The interval 265–296 (IVMAATVCSALYVGDICGAVMIASQAFIISPE) is important for fusion. A glycan (N-linked (GlcNAc...) asparagine; by host) is linked at asparagine 305. The helical transmembrane segment at 359 to 379 (LAYFSMQGAWAKVIAILLLVA) threads the bilayer. The Lumenal segment spans residues 380 to 729 (GVDASTQVTG…WEWVILLFLL (350 aa)). Residues 385–411 (TQVTGGQAAHTVRGVASIFSPGSRQDI) are HVR1. N-linked (GlcNAc...) (high mannose) asparagine; by host glycans are attached at residues asparagine 417, asparagine 423, asparagine 430, and asparagine 448. Disulfide bonds link cysteine 429–cysteine 554, cysteine 452–cysteine 459, cysteine 488–cysteine 496, and cysteine 505–cysteine 510. Residues 474–481 (YETNVTNE) form an HVR2 region. Residues 482 to 495 (EDMRPYCWHYPPKP) are CD81-binding 1. N-linked (GlcNAc...) asparagine; by host glycosylation is present at asparagine 542. The CD81-binding 2 stretch occupies residues 546–553 (PPRGAWFG). The N-linked (GlcNAc...) (high mannose) asparagine; by host glycan is linked to asparagine 558. 4 disulfides stabilise this stretch: cysteine 566/cysteine 571, cysteine 585/cysteine 589, cysteine 601/cysteine 624, and cysteine 611/cysteine 648. 2 N-linked (GlcNAc...) (high mannose) asparagine; by host glycosylation sites follow: asparagine 627 and asparagine 649. Cysteine 656 and cysteine 681 are disulfide-bonded. Residues 664-675 (SQQSPLLHSTTE) form a PKR/eIF2-alpha phosphorylation homology domain (PePHD) region. A helical transmembrane segment spans residues 730–737 (LADARVCA).

Belongs to the hepacivirus polyprotein family. As to quaternary structure, homooligomer. Interacts with E1 (via C-terminus). Interacts with the non-structural protein 5A. Interacts (via N-terminus) with host STAT1 (via SH2 domain); this interaction results in decreased STAT1 phosphorylation and ubiquitin-mediated proteasome-dependent STAT1 degradation, leading to decreased IFN-stimulated gene transcription. Interacts with host STAT3; this interaction constitutively activates STAT3. Interacts with host LTBR receptor. Interacts with host TNFRSF1A receptor and possibly induces apoptosis. Interacts with host HNRPK. Interacts with host YWHAE. Interacts with host UBE3A/E6AP. Interacts with host DDX3X. Interacts with host APOA2. Interacts with host RXRA protein. Interacts with host SP110 isoform 3/Sp110b; this interaction sequesters the transcriptional corepressor SP110 away from the nucleus. Interacts with host CREB3 nuclear transcription protein; this interaction triggers cell transformation. Interacts with host ACY3. Interacts with host C1QR1. Interacts with host RBM24; this interaction, which enhances the interaction of the mature core protein with 5'-UTR, may inhibit viral translation and favor replication. Interacts with host EIF2AK2/PKR; this interaction induces the autophosphorylation of EIF2AK2. Part of the viral assembly initiation complex composed of NS2, E1, E2, NS3, NS4A, NS5A and the mature core protein. Forms a heterodimer with envelope glycoprotein E2. Interacts with mature core protein. Interacts with protease NS2. The heterodimer E1/E2 interacts with host CLDN1; this interaction plays a role in viral entry into host cell. Interacts with host SPSB2 (via C-terminus). Part of the viral assembly initiation complex composed of NS2, E1, E2, NS3, NS4A, NS5A and the mature core protein. In terms of assembly, forms a heterodimer with envelope glycoprotein E1. Interacts with host CD81 and SCARB1 receptors; these interactions play a role in viral entry into host cell. Interacts with host EIF2AK2/PKR; this interaction inhibits EIF2AK2 and probably allows the virus to evade the innate immune response. Interacts with host CD209/DC-SIGN and CLEC4M/DC-SIGNR. Interact with host SPCS1; this interaction is essential for viral particle assembly. Interacts with protease NS2. The heterodimer E1/E2 interacts with host CLDN1; this interaction plays a role in viral entry into host cell. Part of the viral assembly initiation complex composed of NS2, E1, E2, NS3, NS4A, NS5A and the mature core protein. Specific enzymatic cleavages in vivo yield mature proteins. The structural proteins, core, E1, E2 and p7 are produced by proteolytic processing by host signal peptidases. The core protein precursor is synthesized as a 23 kDa, which is retained in the ER membrane through the hydrophobic signal peptide. Cleavage by the signal peptidase releases the 21 kDa mature core protein. The cleavage of the core protein precursor occurs between aminoacids 176 and 188 but the exact cleavage site is not known. Some degraded forms of the core protein appear as well during the course of infection. The other proteins (p7, NS2, NS3, NS4A, NS4B, NS5A and NS5B) are cleaved by the viral proteases. Autoprocessing between NS2 and NS3 is mediated by the NS2 cysteine protease catalytic domain and regulated by the NS3 N-terminal domain. Post-translationally, phosphorylated by host PKC and PKA. In terms of processing, ubiquitinated; mediated by UBE3A and leading to core protein subsequent proteasomal degradation. Highly N-glycosylated.

The protein localises to the host endoplasmic reticulum membrane. The protein resides in the host mitochondrion membrane. It is found in the virion. It localises to the host cytoplasm. Its subcellular location is the host nucleus. The protein localises to the host lipid droplet. The protein resides in the virion membrane. Packages viral RNA to form a viral nucleocapsid, and promotes virion budding. Participates in the viral particle production as a result of its interaction with the non-structural protein 5A. Binds RNA and may function as a RNA chaperone to induce the RNA structural rearrangements taking place during virus replication. Modulates viral translation initiation by interacting with viral IRES and 40S ribosomal subunit. Affects various cell signaling pathways, host immunity and lipid metabolism. Prevents the establishment of cellular antiviral state by blocking the interferon-alpha/beta (IFN-alpha/beta) and IFN-gamma signaling pathways and by blocking the formation of phosphorylated STAT1 and promoting ubiquitin-mediated proteasome-dependent degradation of STAT1. Activates STAT3 leading to cellular transformation. Regulates the activity of cellular genes, including c-myc and c-fos. May repress the promoter of p53, and sequester CREB3 and SP110 isoform 3/Sp110b in the cytoplasm. Represses cell cycle negative regulating factor CDKN1A, thereby interrupting an important check point of normal cell cycle regulation. Targets transcription factors involved in the regulation of inflammatory responses and in the immune response: suppresses TNF-induced NF-kappa-B activation, and activates AP-1. Binds to dendritic cells (DCs) via C1QR1, resulting in down-regulation of T-lymphocytes proliferation. Alters lipid metabolism by interacting with hepatocellular proteins involved in lipid accumulation and storage. Induces up-regulation of FAS promoter activity, and thereby contributes to the increased triglyceride accumulation in hepatocytes (steatosis). Functionally, forms a heterodimer with envelope glycoprotein E2, which mediates virus attachment to the host cell, virion internalization through clathrin-dependent endocytosis and fusion with host membrane. Fusion with the host cell is most likely mediated by both E1 and E2, through conformational rearrangements of the heterodimer required for fusion rather than a classical class II fusion mechanism. E1/E2 heterodimer binds host apolipoproteins such as APOB and ApoE thereby forming a lipo-viro-particle (LVP). APOE associated to the LVP allows the initial virus attachment to cell surface receptors such as the heparan sulfate proteoglycans (HSPGs), syndecan-1 (SDC1), syndecan-1 (SDC2), the low-density lipoprotein receptor (LDLR) and scavenger receptor class B type I (SCARB1). The cholesterol transfer activity of SCARB1 allows E2 exposure and binding of E2 to SCARB1 and the tetraspanin CD81. E1/E2 heterodimer binding on CD81 activates the epithelial growth factor receptor (EGFR) signaling pathway. Diffusion of the complex E1-E2-EGFR-SCARB1-CD81 to the cell lateral membrane allows further interaction with Claudin 1 (CLDN1) and occludin (OCLN) to finally trigger HCV entry. In terms of biological role, forms a heterodimer with envelope glycoprotein E1, which mediates virus attachment to the host cell, virion internalization through clathrin-dependent endocytosis and fusion with host membrane. Fusion with the host cell is most likely mediated by both E1 and E2, through conformational rearrangements of the heterodimer required for fusion rather than a classical class II fusion mechanism. The interaction between envelope glycoprotein E2 and host apolipoprotein E/APOE allows the proper assembly, maturation and infectivity of the viral particles. This interaction is probably promoted via the up-regulation of cellular autophagy by the virus. E1/E2 heterodimer binds host apolipoproteins such as APOB and APOE thereby forming a lipo-viro-particle (LVP). APOE associated to the LVP allows the initial virus attachment to cell surface receptors such as the heparan sulfate proteoglycans (HSPGs), syndecan-1 (SDC1), syndecan-1 (SDC2), the low-density lipoprotein receptor (LDLR) and scavenger receptor class B type I (SCARB1). The cholesterol transfer activity of SCARB1 allows E2 exposure and binding of E2 to SCARB1 and the tetraspanin CD81. E1/E2 heterodimer binding on CD81 activates the epithelial growth factor receptor (EGFR) signaling pathway. Diffusion of the complex E1-E2-EGFR-SCARB1-CD81 to the cell lateral membrane allows further interaction with Claudin 1 (CLDN1) and occludin (OCLN) to finally trigger HCV entry. Inhibits host EIF2AK2/PKR activation, preventing the establishment of an antiviral state. Viral ligand for CD209/DC-SIGN and CLEC4M/DC-SIGNR, which are respectively found on dendritic cells (DCs), and on liver sinusoidal endothelial cells and macrophage-like cells of lymph node sinuses. These interactions allow the capture of circulating HCV particles by these cells and subsequent facilitated transmission to permissive cells such as hepatocytes and lymphocyte subpopulations. This Hepatitis C virus (isolate HC-J7) (HCV) protein is Genome polyprotein.